The chain runs to 425 residues: Serine--tRNA ligase (425 aa).

Residue 230–232 (TAE) participates in L-serine binding. Position 261–263 (261–263 (RSE)) interacts with ATP. An L-serine-binding site is contributed by E284. Residue 348–351 (EISS) coordinates ATP. An L-serine-binding site is contributed by S384.

The protein belongs to the class-II aminoacyl-tRNA synthetase family. Type-1 seryl-tRNA synthetase subfamily. As to quaternary structure, homodimer. The tRNA molecule binds across the dimer.

Its subcellular location is the cytoplasm. It catalyses the reaction tRNA(Ser) + L-serine + ATP = L-seryl-tRNA(Ser) + AMP + diphosphate + H(+). The enzyme catalyses tRNA(Sec) + L-serine + ATP = L-seryl-tRNA(Sec) + AMP + diphosphate + H(+). The protein operates within aminoacyl-tRNA biosynthesis; selenocysteinyl-tRNA(Sec) biosynthesis; L-seryl-tRNA(Sec) from L-serine and tRNA(Sec): step 1/1. Its function is as follows. Catalyzes the attachment of serine to tRNA(Ser). Is also able to aminoacylate tRNA(Sec) with serine, to form the misacylated tRNA L-seryl-tRNA(Sec), which will be further converted into selenocysteinyl-tRNA(Sec). This is Serine--tRNA ligase from Streptococcus equi subsp. zooepidemicus (strain MGCS10565).